The following is a 553-amino-acid chain: Cytokine-like nuclear factor N-PAC (553 aa).

Positions 8-66 constitute a PWWP domain; that stretch reads LGDLVWGKLGRYPPWPGKIVNPPKDLKKPRGKKCFFVKFFGTEDHAWIKVEQLKPYHAH. 2 stretches are compositionally biased toward basic and acidic residues: residues 92-145 and 162-182; these read RAKG…EGKK and RAQEQSPRKRGRPPKDEKDLT. Residues 92–188 are disordered; it reads RAKGKDQTSS…KDLTIPESST (97 aa). Serine 130 is modified (phosphoserine). Lysine 135 is covalently cross-linked (Glycyl lysine isopeptide (Lys-Gly) (interchain with G-Cter in SUMO2)). Serine 167 is modified (phosphoserine). The a.T hook DNA-binding region spans 168 to 180; sequence PRKRGRPPKDEKD. Residues lysine 176, lysine 179, lysine 201, and lysine 211 each participate in a glycyl lysine isopeptide (Lys-Gly) (interchain with G-Cter in SUMO2) cross-link. The tract at residues 214–217 is interaction with histone H3; the sequence is DPHF. Residues 216–225 are interaction with KDM1B; sequence HFHHFLLSQT. Residues lysine 227, lysine 237, lysine 240, and lysine 269 each participate in a glycyl lysine isopeptide (Lys-Gly) (interchain with G-Cter in SUMO2) cross-link. Residues 261–553 are dehydrogenase domain; sequence GSITPTDKKI…MSAVYRAYIH (293 aa). 271 to 285 provides a ligand contact to NAD(+); it reads GFLGLGLMGSGIVSN. A Glycyl lysine isopeptide (Lys-Gly) (interchain with G-Cter in SUMO2) cross-link involves residue lysine 302. NAD(+) is bound by residues threonine 362 and lysine 505. Serine 540 carries the post-translational modification Phosphoserine.

The protein belongs to the HIBADH-related family. NP60 subfamily. In terms of assembly, homotetramere. Interacts with MAPK14. Interacts with KDM1B at nucleosomes; this interaction stimulates H3K4me1 and H3K4me2 demethylation. Binds to mononucleosomes. Interacts with GATA4; the interaction is required for a synergistic activation of GATA4 target genes transcription.

The protein localises to the nucleus. Its subcellular location is the chromosome. In terms of biological role, cytokine-like nuclear factor with chromatin gene reader activity involved in chromatin modification and regulation of gene expression. Acts as a nucleosome-destabilizing factor that is recruited to genes during transcriptional activation. Recognizes and binds histone H3 without a preference for specific epigenetic markers and also binds DNA. Interacts with KDM1B and promotes its histone demethylase activity by facilitating the capture of H3 tails, they form a multifunctional enzyme complex that modifies transcribed chromatin and facilitates Pol II transcription through nucleosomes. Stimulates the acetylation of 'Lys-56' of nucleosomal histone H3 (H3K56ac) by EP300. With GATA4, co-binds a defined set of heart development genes and coregulates their expression during cardiomyocyte differentiation. Regulates p38 MAP kinase activity by mediating stress activation of MAPK14/p38alpha and specifically regulating MAPK14 signaling. Indirectly promotes phosphorylation of MAPK14 and activation of ATF2. The phosphorylation of MAPK14 requires upstream activity of MAP2K4 and MAP2K6. This is Cytokine-like nuclear factor N-PAC from Homo sapiens (Human).